The chain runs to 570 residues: Ribosome-inactivating protein SNAI (570 aa).

The first 28 residues, 1-28 (MRLVAKLLYLAVLAICGLGIHGALTHPR), serve as a signal peptide directing secretion. N-linked (GlcNAc...) asparagine glycans are attached at residues asparagine 40, asparagine 62, and asparagine 144. Residue glutamate 199 is part of the active site. Asparagine 260 is a glycosylation site (N-linked (GlcNAc...) asparagine). Intrachain disulfides connect cysteine 284–cysteine 316, cysteine 332–cysteine 351, and cysteine 373–cysteine 385. Ricin B-type lectin domains are found at residues 319-439 (VEVT…WTVG) and 441-566 (VEPL…WITT). The 1-alpha repeat unit spans residues 329–369 (DGLCVDVRYGHYIDGNPVQLRPCGNECNQLWTFRTDGTIRW). One copy of the 1-beta repeat lies at 370 to 405 (LGKCLTASSSVMIYDCNTVPPEATKWVVSIDGTITN). The 1-gamma repeat unit spans residues 408–440 (SGLVLTAPQAAEGTALSLENNIHAARQGWTVGD). One copy of the 2-alpha repeat lies at 452–489 (KQMCLRENGENNFVWLEDCVLNRVQQEWALYGDGTIRV). Cysteine 455 and cysteine 470 are oxidised to a cystine. N-linked (GlcNAc...) asparagine glycosylation is present at asparagine 492. One copy of the 2-beta repeat lies at 493–531 (RSLCVTSEDHEPSDLIVILKCEGSGNQRWVFNTNGTISN). A disulfide bridge connects residues cysteine 496 and cysteine 513. The N-linked (GlcNAc...) asparagine glycan is linked to asparagine 526. The stretch at 534 to 567 (AKLLMDVAQRDVSLRKIILYRPTGNPNQQWITTT) is one 2-gamma repeat.

Belongs to the ribosome-inactivating protein family. Type 2 RIP subfamily. Tetramer of four pairs of disulfide bound A-B chains. In terms of processing, the precursor is processed in two chains, A and B, that are linked by a disulfide bond. A small truncated form corresponding roughly to the second ricin B-type lectin domain of the B chain, TrSNAI, can also be produced. Post-translationally, glycosylated. N-glycans of subunit A are (Man)2-3(Xyl)(GlcNAc)2(Fuc) at Asn-40, (GlcNAc)0-2(Man)3(Xyl)(GlcNAc)2(Fuc) or (Man)1-2(GlcNAc)2 at Asn-62, (Man)3(Xyl)(GlcNAc)2(Fuc)0-1 at Asn-144 and (GlcNAc)0-1(Man)3(Xyl)(GlcNAc)2(Fuc) at Asn-260. N-glycans of subunit B are (Man)3(Xyl)(GlcNAc)2(Fuc) at Asn-492 and (Man)6-9(GlcNAc)2 at Asn-526. In terms of tissue distribution, expressed in bark.

The enzyme catalyses Endohydrolysis of the N-glycosidic bond at one specific adenosine on the 28S rRNA.. In terms of biological role, neu5Ac(alpha2-6)Gal/GalNAc specific agglutinin. Behaves as a type-2 ribosome-inactivating protein. Strongly inhibits mammalian but not plant ribosomes. The A chain is responsible for inhibiting protein synthesis through the catalytic inactivation of 60S ribosomal subunits by removing adenine from position 4,324 of 28S rRNA. The B chain binds to cell receptors and probably facilitates the entry into the cell of the A chain; B chains are also responsible for cell agglutination (lectin activity). Involved in plant defense against insects. Its function is as follows. Binds Neu5Ac(alpha2-6)Gal/GalNAc but has no clear agglutination activity. This Sambucus nigra (European elder) protein is Ribosome-inactivating protein SNAI.